A 431-amino-acid polypeptide reads, in one-letter code: MSFLVSKPERIRRWVSEKFIVEGLRDLELFGEQPPGDTRRKTNDASSESIASFSKQEVMSSFLPEGGCYELLTVIGKGFEDLMTVNLARYKPTGEYVTVRRINLEACSNEMVTFLQGELHVSKLFNHPNIVPYRATFIADNELWVVTSFMAYGSAKDLICTHFMDGMNELAIAYILQGVLKALDYIHHMGYVHRSVKASHILISVDGKVYLSGLRSNLSMISHGQRQRVVHDFPKYSVKVLPWLSPEVLQQNLQGYDAKSDIYSVGITACELANGHVPFKDMPATQMLLEKLNGTVPCLLDTSTIPAEELTMSPSRSVANSGLSDSLTTSTPRPSNGDSPSHPYHRTFSPHFHHFVEQCLQRNPDARPSASTLLNHSFFKQIKRRASEALPELLRPVTPITNFEGSQSQDHSGIFGLVTNLEELEVDDWEF.

A phosphoserine mark is found at Ser-2 and Ser-46. The Protein kinase domain occupies 69 to 379 (YELLTVIGKG…ASTLLNHSFF (311 aa)). The segment at 310–347 (LTMSPSRSVANSGLSDSLTTSTPRPSNGDSPSHPYHRT) is disordered. Positions 312–339 (MSPSRSVANSGLSDSLTTSTPRPSNGDS) are enriched in polar residues. Residues Thr-329 and Thr-419 each carry the phosphothreonine; by LKB1 modification.

The protein belongs to the protein kinase superfamily. STE Ser/Thr protein kinase family. STE20 subfamily. Component of a trimeric complex composed of STK11/LKB1, STRAD (STRADA or STRADB) and CAB39/MO25 (CAB39/MO25alpha or CAB39L/MO25beta): the complex tethers STK11/LKB1 in the cytoplasm and stimulates its catalytic activity.

The protein resides in the nucleus. The protein localises to the cytoplasm. Pseudokinase which, in complex with CAB39/MO25 (CAB39/MO25alpha or CAB39L/MO25beta), binds to and activates STK11/LKB1. Adopts a closed conformation typical of active protein kinases and binds STK11/LKB1 as a pseudosubstrate, promoting conformational change of STK11/LKB1 in an active conformation. This chain is STE20-related kinase adapter protein alpha (STRADA), found in Homo sapiens (Human).